Consider the following 307-residue polypeptide: tRNA pseudouridine synthase B (307 aa).

Asp38 functions as the Nucleophile in the catalytic mechanism.

Belongs to the pseudouridine synthase TruB family. Type 1 subfamily.

It catalyses the reaction uridine(55) in tRNA = pseudouridine(55) in tRNA. Its function is as follows. Responsible for synthesis of pseudouridine from uracil-55 in the psi GC loop of transfer RNAs. This is tRNA pseudouridine synthase B from Bacillus cytotoxicus (strain DSM 22905 / CIP 110041 / 391-98 / NVH 391-98).